The primary structure comprises 176 residues: 2-C-methyl-D-erythritol 2,4-cyclodiphosphate synthase (176 aa).

Residues Asp-23, His-25, and His-60 each contribute to the a divalent metal cation site. Asp-23–His-25 serves as a coordination point for 4-CDP-2-C-methyl-D-erythritol 2-phosphate. Thr-149–Glu-152 is a 4-CDP-2-C-methyl-D-erythritol 2-phosphate binding site.

The protein belongs to the IspF family. Homotrimer. It depends on a divalent metal cation as a cofactor.

The enzyme catalyses 4-CDP-2-C-methyl-D-erythritol 2-phosphate = 2-C-methyl-D-erythritol 2,4-cyclic diphosphate + CMP. It functions in the pathway isoprenoid biosynthesis; isopentenyl diphosphate biosynthesis via DXP pathway; isopentenyl diphosphate from 1-deoxy-D-xylulose 5-phosphate: step 4/6. Its function is as follows. Involved in the biosynthesis of isopentenyl diphosphate (IPP) and dimethylallyl diphosphate (DMAPP), two major building blocks of isoprenoid compounds. Catalyzes the conversion of 4-diphosphocytidyl-2-C-methyl-D-erythritol 2-phosphate (CDP-ME2P) to 2-C-methyl-D-erythritol 2,4-cyclodiphosphate (ME-CPP) with a corresponding release of cytidine 5-monophosphate (CMP). This is 2-C-methyl-D-erythritol 2,4-cyclodiphosphate synthase from Chlamydia abortus (strain DSM 27085 / S26/3) (Chlamydophila abortus).